The primary structure comprises 510 residues: Protein ERGIC-53 (510 aa).

Positions 1-30 are cleaved as a signal peptide; it reads MAGSRQRGLRARVRPLFCALLLSLGRFVRG. Topologically, residues 31–477 are lumenal; it reads DGVGGDPAVA…ELPPFPSCLS (447 aa). Residues 44–267 form the L-type lectin-like domain; sequence RRFEYKYSFK…DVLSFLTFQL (224 aa). A carbohydrate is bound by residues Ser-88 and Asp-121. Ca(2+)-binding residues include Asp-152, Phe-154, and Asn-156. A carbohydrate-binding residues include Asn-156 and His-178. Asp-181 contributes to the Ca(2+) binding site. Cys-190 and Cys-230 are disulfide-bonded. 251 to 253 contributes to the a carbohydrate binding site; that stretch reads GGL. Ser-425 is modified (phosphoserine). A helical membrane pass occupies residues 478 to 498; it reads TVHFIIFVVVQTVLFIGYIMY. Topologically, residues 499 to 510 are cytoplasmic; sequence RSQQEAAAKKFF. The mediates interaction with RAB3GAP1, RAB3GAP2 and UBXN6 stretch occupies residues 499–510; it reads RSQQEAAAKKFF. The ER export motif signature appears at 509–510; that stretch reads FF.

In terms of assembly, exists both as a covalent disulfide-linked homohexamer, and a complex of three disulfide-linked dimers non-covalently kept together. Interacts with MCFD2. May interact with TMEM115. Interacts with RAB3GAP1 and RAB3GAP2. Interacts with UBXN6. Interacts with SERPINA1/alpha1-antitrypsin. Interacts with BET1. The N-terminal may be partly blocked. Ubiquitous.

The protein resides in the endoplasmic reticulum-Golgi intermediate compartment membrane. Its subcellular location is the golgi apparatus membrane. It is found in the endoplasmic reticulum membrane. Its function is as follows. Mannose-specific lectin. May recognize sugar residues of glycoproteins, glycolipids, or glycosylphosphatidyl inositol anchors and may be involved in the sorting or recycling of proteins, lipids, or both. The LMAN1-MCFD2 complex forms a specific cargo receptor for the ER-to-Golgi transport of selected proteins. This chain is Protein ERGIC-53 (LMAN1), found in Homo sapiens (Human).